Reading from the N-terminus, the 1737-residue chain is Complement C4 (1737 aa).

A signal peptide spans 1-19; the sequence is MRLLWGLAWAFSFFASSLQ. A disulfide bond links Cys-66 and Cys-95. N-linked (GlcNAc...) asparagine glycans are attached at residues Asn-224 and Asn-664. The cysteines at positions 633 and 667 are disulfide-linked. The propeptide occupies 674 to 677; sequence RQKR. 3 disulfide bridges follow: Cys-700-Cys-726, Cys-701-Cys-733, and Cys-714-Cys-734. The 35-residue stretch at 700–734 folds into the Anaphylatoxin-like domain; the sequence is CCQDGMTKLPMARTCEQRAARVPQPACREPFLSCC. Asn-743 is a glycosylation site (N-linked (GlcNAc...) asparagine). Positions 1005–1008 form a cross-link, isoglutamyl cysteine thioester (Cys-Gln); it reads CAEQ. 2 N-linked (GlcNAc...) asparagine glycosylation sites follow: Asn-1323 and Asn-1386. A sulfotyrosine mark is found at Tyr-1412, Tyr-1414, and Tyr-1416. Positions 1443 to 1446 are excised as a propeptide; sequence RRRR. 5 cysteine pairs are disulfide-bonded: Cys-1464-Cys-1528, Cys-1576-Cys-1581, Cys-1588-Cys-1666, Cys-1611-Cys-1735, and Cys-1711-Cys-1720. Residues 1588–1735 enclose the NTR domain; sequence CPRQRRSLER…FLQEYSSQGC (148 aa). Tyr-1676 carries the post-translational modification Sulfotyrosine.

In terms of assembly, in absence of complement activation, circulates in blood as a disulfide-linked trimer of an alpha, beta and gamma chain. As to quaternary structure, complement C4b is composed of complement C4b-A, complement C4 beta and complement C4 gamma chains that are associated via disulfide bonds. Non-enzymatic component of the C3 convertase, also named C4bC2b, composed of the serine protease complement C2b (C2), as well as complement C4b. Non-enzymatic component of the C5 convertase, also named C4bC2bC3b, composed of the serine protease complement C2b (C2), complement C3b, as well as complement C4b. In terms of processing, prior to secretion, the single-chain precursor is enzymatically cleaved by plasminogen (PLG) to yield non-identical chains alpha, beta and gamma. During activation of the complement systems, the alpha chain is cleaved into C4a and C4b by different proteases depending on the complement pathway: C4b stays linked to the beta and gamma chains, while C4a is released in the plasma. The alpha chain is cleaved by C1S to generate C4a and C4b following activation by the classical complement system. The alpha chain is cleaved to generate C4a and C4b by MASP2 following activation by the lectin complement system. The alpha chain is cleaved by GZMK to generate C4a and C4b following activation by the GZMK complement system. Further degradation of C4b by C1 into the inactive fragments C4c and C4d blocks the generation of C3 convertase. The proteolytic cleavages often are incomplete so that many structural forms can be found in plasma. Post-translationally, upon activation, the internal thioester bond reacts with carbohydrate antigens on the target surface to form amide or ester bonds, leading to covalent association with the surface of pathogens. Complement C4b interacts with complement C3b via a thioester linkage. In terms of processing, N- and O-glycosylated. O-glycosylated with a core 1 or possibly core 8 glycan.

It localises to the secreted. The protein localises to the cell surface. Functionally, precursor of non-enzymatic components of the classical, lectin and GZMK complement pathways, which consist in a cascade of proteins that leads to phagocytosis and breakdown of pathogens and signaling that strengthens the adaptive immune system. Non-enzymatic component of C3 and C5 convertases. Generated following cleavage by complement proteases (C1S, MASP2 or GZMK, depending on the complement pathway), it covalently attaches to the surface of pathogens, where it acts as an opsonin that marks the surface of antigens for removal. It then recruits the serine protease complement C2b to form the C3 and C5 convertases, which cleave and activate C3 and C5, respectively, the next components of the complement pathways. Complement C4b-A isotype is responsible for effective binding to form amide bonds with immune aggregates or protein antigens, while complement C4b-B isotype catalyzes the transacylation of the thioester carbonyl group to form ester bonds with carbohydrate antigens. In terms of biological role, putative humoral mediator released following cleavage by complement proteases (C1S, MASP2 or GZMK, depending on the complement pathway). While it is strongly similar to anaphylatoxins, its role is unclear. Was reported to act as a mediator of local inflammatory process; however these effects were probably due to contamination with C3a and/C5a anaphylatoxins in biological assays. The sequence is that of Complement C4 from Rattus norvegicus (Rat).